A 271-amino-acid polypeptide reads, in one-letter code: 2-dehydro-3-deoxyphosphooctonate aldolase (271 aa).

It belongs to the KdsA family.

Its subcellular location is the cytoplasm. The catalysed reaction is D-arabinose 5-phosphate + phosphoenolpyruvate + H2O = 3-deoxy-alpha-D-manno-2-octulosonate-8-phosphate + phosphate. Its pathway is carbohydrate biosynthesis; 3-deoxy-D-manno-octulosonate biosynthesis; 3-deoxy-D-manno-octulosonate from D-ribulose 5-phosphate: step 2/3. It participates in bacterial outer membrane biogenesis; lipopolysaccharide biosynthesis. This chain is 2-dehydro-3-deoxyphosphooctonate aldolase, found in Campylobacter jejuni subsp. jejuni serotype O:23/36 (strain 81-176).